The sequence spans 477 residues: Proton-coupled amino acid transporter 3 (477 aa).

Positions 1–13 are enriched in basic and acidic residues; sequence MGKTPLLREDGRC. Residues 1 to 42 form a disordered region; the sequence is MGKTPLLREDGRCQRNTFGGSKASSKGSSSSSSNNTVSSKKK. Residues 1–54 lie on the Cytoplasmic side of the membrane; it reads MGKTPLLREDGRCQRNTFGGSKASSKGSSSSSSNNTVSSKKKPRRKADALMFIQ. Over residues 19-38 the composition is skewed to low complexity; that stretch reads GGSKASSKGSSSSSSNNTVS. Residues 55-75 traverse the membrane as a helical segment; it reads IFIHLLKSNIGTGFLGLPLAV. Topologically, residues 76–77 are extracellular; it reads KN. Residues 78–98 form a helical membrane-spanning segment; sequence AGLLVGPVSLLAIGALTVHCM. The Cytoplasmic segment spans residues 99–144; it reads DILLNCACHLTSRLQRSFVNYEETTMYSLETCPSPWLRTHSVWGRY. A helical membrane pass occupies residues 145–165; it reads VVSFLLIVTQLGFCSVYFMFM. Residues 166-202 are Extracellular-facing; sequence ADNLQQIVEEAHFTSNVCQPRQSLVMTSILDTRFYML. The helical transmembrane segment at 203–223 threads the bilayer; it reads TILPFLILLVLVQNPQVLSIF. At 224-225 the chain is on the cytoplasmic side; it reads ST. Residues 226–246 traverse the membrane as a helical segment; the sequence is LATITTLSSLALIFEYLIQIP. The Extracellular segment spans residues 247-259; it reads HHSHLPLVASWKT. A helical transmembrane segment spans residues 260 to 280; it reads FLLFFGTAIFTFEGVGMVLPL. Residues 281–291 lie on the Cytoplasmic side of the membrane; sequence KSQMKSPQQFP. Residues 292-312 form a helical membrane-spanning segment; it reads AVLYLGMSFVIFLYICLGTLG. Topologically, residues 313–344 are extracellular; sequence YMKFGADTQASITLNLPNCWLYQSVKLMYSVG. The chain crosses the membrane as a helical span at residues 345-365; that stretch reads IFFTYALQFHVPAEIIVPYVV. Residues 366-374 are Cytoplasmic-facing; sequence SRASENWAL. A helical transmembrane segment spans residues 375 to 395; the sequence is FIDLTVRAALVCLTCFSAVLI. The Extracellular segment spans residues 396–399; the sequence is PRLD. A helical membrane pass occupies residues 400–420; that stretch reads LVISLVGSVSSSALALIIPPL. Topologically, residues 421 to 439 are cytoplasmic; the sequence is LEIATFYSENISCTTIAKD. A helical transmembrane segment spans residues 440–460; the sequence is IMISILGLLGCVLGTYQALYE. Over 461–477 the chain is Extracellular; it reads MTQQSRFPMLNSTNVHT.

Belongs to the amino acid/polyamine transporter 2 family.

It is found in the membrane. This is Proton-coupled amino acid transporter 3 (Slc36a3) from Rattus norvegicus (Rat).